Here is a 216-residue protein sequence, read N- to C-terminus: Thymidylate kinase (216 aa).

9-16 (GIEGSGKT) provides a ligand contact to ATP.

The protein belongs to the thymidylate kinase family.

The enzyme catalyses dTMP + ATP = dTDP + ADP. Phosphorylation of dTMP to form dTDP in both de novo and salvage pathways of dTTP synthesis. The chain is Thymidylate kinase from Syntrophotalea carbinolica (strain DSM 2380 / NBRC 103641 / GraBd1) (Pelobacter carbinolicus).